Reading from the N-terminus, the 306-residue chain is tRNA pseudouridine synthase B (306 aa).

Asp-38 functions as the Nucleophile in the catalytic mechanism.

Belongs to the pseudouridine synthase TruB family. Type 1 subfamily.

The enzyme catalyses uridine(55) in tRNA = pseudouridine(55) in tRNA. Functionally, responsible for synthesis of pseudouridine from uracil-55 in the psi GC loop of transfer RNAs. The polypeptide is tRNA pseudouridine synthase B (Syntrophotalea carbinolica (strain DSM 2380 / NBRC 103641 / GraBd1) (Pelobacter carbinolicus)).